The following is an 804-amino-acid chain: Lon protease 2 (804 aa).

One can recognise a Lon N-terminal domain in the interval 6–199 (MPVCPVRGSV…AVLVLLEAEL (194 aa)). Residue 362–369 (GPPGVGKT) participates in ATP binding. One can recognise a Lon proteolytic domain in the interval 598-779 (EPQVGVATGM…DQVLDLALVG (182 aa)). Active-site residues include serine 685 and lysine 728.

Belongs to the peptidase S16 family. In terms of assembly, homohexamer. Organized in a ring with a central cavity.

The protein resides in the cytoplasm. The catalysed reaction is Hydrolysis of proteins in presence of ATP.. Functionally, ATP-dependent serine protease that mediates the selective degradation of mutant and abnormal proteins as well as certain short-lived regulatory proteins. Required for cellular homeostasis and for survival from DNA damage and developmental changes induced by stress. Degrades polypeptides processively to yield small peptide fragments that are 5 to 10 amino acids long. Binds to DNA in a double-stranded, site-specific manner. The polypeptide is Lon protease 2 (Thermus thermophilus (strain ATCC BAA-163 / DSM 7039 / HB27)).